Here is a 215-residue protein sequence, read N- to C-terminus: UPF0502 protein YceH (215 aa).

Lys80 carries the post-translational modification N6-acetyllysine.

This sequence belongs to the UPF0502 family.

The protein is UPF0502 protein YceH of Shigella flexneri serotype 5b (strain 8401).